The sequence spans 297 residues: 4-hydroxy-tetrahydrodipicolinate synthase (297 aa).

Threonine 50 is a binding site for pyruvate. The active-site Proton donor/acceptor is the tyrosine 139. Residue lysine 167 is the Schiff-base intermediate with substrate of the active site. Pyruvate is bound at residue valine 209.

It belongs to the DapA family. As to quaternary structure, homotetramer; dimer of dimers.

Its subcellular location is the cytoplasm. The enzyme catalyses L-aspartate 4-semialdehyde + pyruvate = (2S,4S)-4-hydroxy-2,3,4,5-tetrahydrodipicolinate + H2O + H(+). It participates in amino-acid biosynthesis; L-lysine biosynthesis via DAP pathway; (S)-tetrahydrodipicolinate from L-aspartate: step 3/4. Its function is as follows. Catalyzes the condensation of (S)-aspartate-beta-semialdehyde [(S)-ASA] and pyruvate to 4-hydroxy-tetrahydrodipicolinate (HTPA). This chain is 4-hydroxy-tetrahydrodipicolinate synthase, found in Microcystis aeruginosa (strain NIES-843 / IAM M-2473).